An 879-amino-acid polypeptide reads, in one-letter code: Alanine--tRNA ligase (879 aa).

Residues His566, His570, Cys668, and His672 each contribute to the Zn(2+) site.

This sequence belongs to the class-II aminoacyl-tRNA synthetase family. Requires Zn(2+) as cofactor.

The protein resides in the cytoplasm. It catalyses the reaction tRNA(Ala) + L-alanine + ATP = L-alanyl-tRNA(Ala) + AMP + diphosphate. In terms of biological role, catalyzes the attachment of alanine to tRNA(Ala) in a two-step reaction: alanine is first activated by ATP to form Ala-AMP and then transferred to the acceptor end of tRNA(Ala). Also edits incorrectly charged Ser-tRNA(Ala) and Gly-tRNA(Ala) via its editing domain. The sequence is that of Alanine--tRNA ligase from Listeria monocytogenes serotype 4b (strain F2365).